The following is a 253-amino-acid chain: 2-dehydro-3-deoxy-D-gluconate 5-dehydrogenase (253 aa).

Val14 to Val38 contacts NAD(+). Substrate is bound at residue Ser145. Tyr158 acts as the Proton acceptor in catalysis.

This sequence belongs to the short-chain dehydrogenases/reductases (SDR) family. Homotetramer.

It catalyses the reaction 2-dehydro-3-deoxy-D-gluconate + NAD(+) = 3-deoxy-D-glycero-2,5-hexodiulosonate + NADH + H(+). It carries out the reaction 4-pregnen-20,21-diol-3-one + NAD(+) = 21-hydroxyprogesterone + NADH + H(+). Functionally, catalyzes the reversible reduction of 2,5-diketo-3-deoxygluconate (DKII or 4,6-dihydroxy-2,5-dioxohexanoate) into 2-keto-3-deoxygluconate (KDG or 2-dehydro-3-deoxygluconate) with a concomitant oxidation of NADH. To a lesser extent, can also reduce 5-keto-D-gluconate and oxidize D-gluconate and 1,2-propanediol. Together with KduI, seems to play a role in the catabolism of hexuronates under osmotic stress conditions, substituting for the regular hexuronate degrading enzymes UxaABC and UxuAB whose expression is repressed in these conditions. In vitro, also exhibits NADH-dependent 20-ketosteroid reductase activity against eukaryotic steroid hormone 11-deoxycorticosterone (11-DOC), which is converted into the product 4-pregnen-20,21-diol-3-one. In addition to 11-DOC, five other C21 steroid compounds (11-deoxycortisol, cortisol, corticosterone, cortisone, and 21-hydroxypregnenolone) are reduced by KduD, but steroids lacking the hydroxyl group at C21 position, such as pregnenolone, testosterone propionate, cortisone acetate, or progesterone, cannot be used as substrate. The chain is 2-dehydro-3-deoxy-D-gluconate 5-dehydrogenase from Escherichia coli (strain K12).